The chain runs to 203 residues: Holliday junction branch migration complex subunit RuvA (203 aa).

The interval 1–64 (MIGRLRGTLA…EDAQLLYGFI (64 aa)) is domain I. A domain II region spans residues 65 to 143 (GKRDRDFFRE…AWEVVPSMFA (79 aa)). The interval 144–154 (LVPNQPDMPAG) is flexible linker. A domain III region spans residues 155–203 (QVASAESDAVSALISLGYKPQEASKAVSAIKDKNLSSEDMIRRALKGMI).

It belongs to the RuvA family. As to quaternary structure, homotetramer. Forms an RuvA(8)-RuvB(12)-Holliday junction (HJ) complex. HJ DNA is sandwiched between 2 RuvA tetramers; dsDNA enters through RuvA and exits via RuvB. An RuvB hexamer assembles on each DNA strand where it exits the tetramer. Each RuvB hexamer is contacted by two RuvA subunits (via domain III) on 2 adjacent RuvB subunits; this complex drives branch migration. In the full resolvosome a probable DNA-RuvA(4)-RuvB(12)-RuvC(2) complex forms which resolves the HJ.

The protein resides in the cytoplasm. Functionally, the RuvA-RuvB-RuvC complex processes Holliday junction (HJ) DNA during genetic recombination and DNA repair, while the RuvA-RuvB complex plays an important role in the rescue of blocked DNA replication forks via replication fork reversal (RFR). RuvA specifically binds to HJ cruciform DNA, conferring on it an open structure. The RuvB hexamer acts as an ATP-dependent pump, pulling dsDNA into and through the RuvAB complex. HJ branch migration allows RuvC to scan DNA until it finds its consensus sequence, where it cleaves and resolves the cruciform DNA. This chain is Holliday junction branch migration complex subunit RuvA, found in Pseudomonas fluorescens (strain SBW25).